Here is a 372-residue protein sequence, read N- to C-terminus: 4-hydroxy-3-methylbut-2-en-1-yl diphosphate synthase (flavodoxin) (372 aa).

C270, C273, C305, and E312 together coordinate [4Fe-4S] cluster.

Belongs to the IspG family. The cofactor is [4Fe-4S] cluster.

The catalysed reaction is (2E)-4-hydroxy-3-methylbut-2-enyl diphosphate + oxidized [flavodoxin] + H2O + 2 H(+) = 2-C-methyl-D-erythritol 2,4-cyclic diphosphate + reduced [flavodoxin]. Its pathway is isoprenoid biosynthesis; isopentenyl diphosphate biosynthesis via DXP pathway; isopentenyl diphosphate from 1-deoxy-D-xylulose 5-phosphate: step 5/6. Functionally, converts 2C-methyl-D-erythritol 2,4-cyclodiphosphate (ME-2,4cPP) into 1-hydroxy-2-methyl-2-(E)-butenyl 4-diphosphate. This chain is 4-hydroxy-3-methylbut-2-en-1-yl diphosphate synthase (flavodoxin), found in Alteromonas mediterranea (strain DSM 17117 / CIP 110805 / LMG 28347 / Deep ecotype).